The primary structure comprises 601 residues: Elongation factor 4 (601 aa).

Residues 7-189 form the tr-type G domain; that stretch reads KNIRNFSIVA…AIVTRLPPPQ (183 aa). GTP is bound by residues 19-24 and 136-139; these read DHGKST and NKID.

The protein belongs to the TRAFAC class translation factor GTPase superfamily. Classic translation factor GTPase family. LepA subfamily.

It is found in the cell inner membrane. It carries out the reaction GTP + H2O = GDP + phosphate + H(+). Functionally, required for accurate and efficient protein synthesis under certain stress conditions. May act as a fidelity factor of the translation reaction, by catalyzing a one-codon backward translocation of tRNAs on improperly translocated ribosomes. Back-translocation proceeds from a post-translocation (POST) complex to a pre-translocation (PRE) complex, thus giving elongation factor G a second chance to translocate the tRNAs correctly. Binds to ribosomes in a GTP-dependent manner. The protein is Elongation factor 4 of Methylocella silvestris (strain DSM 15510 / CIP 108128 / LMG 27833 / NCIMB 13906 / BL2).